Consider the following 375-residue polypeptide: Type II restriction enzyme ApaLI (375 aa).

The catalysed reaction is Endonucleolytic cleavage of DNA to give specific double-stranded fragments with terminal 5'-phosphates.. Its function is as follows. A subtype P restriction enzyme that recognizes the double-stranded sequence 5'-GTGCAC-3' and cleaves after G-1. The sequence is that of Type II restriction enzyme ApaLI from Acetobacter pasteurianus (Acetobacter turbidans).